Reading from the N-terminus, the 407-residue chain is MTMKHQDAFEQIAFGTVDMLPEGEMLARLAAAQRDNRPLRIKLGMDPTAPDLHLGAYVLLHKARQFQDLGHRLLFVIGDFTAMIGDPTGKSVTRKALSREEVVANAATYRPQVFKILDPERTEVMFNSEWLGALRPEELIQIAACYTVARMLERDDFNKRYSANQPIAIHEFLYPLLQGYDSVAIKADVELGGTDQRFNLLVGRELQREYGQKPQLVLTMPILEGLDGVQKMSKSLGNFIAVEDPPAEMFGKIMSISDFLMWRYYALLSRVPAVEQTRLQKEAASGARNPRDIKLDLAGELVRRFHGTAAAQEAHIAFLARFQRHETPEDLPLQAIKLSEAPRLSQLLVQVHLAASTSEAMRKMKEGAVRVDWRRVVDPATILALDAVYLLQFGKRHFARVALQKGE.

The 'HIGH' region motif lies at 47–56 (PTAPDLHLGA). Positions 231–235 (KMSKS) match the 'KMSKS' region motif. Lysine 234 contacts ATP. Residues 342-403 (PRLSQLLVQV…GKRHFARVAL (62 aa)) form the S4 RNA-binding domain.

It belongs to the class-I aminoacyl-tRNA synthetase family. TyrS type 2 subfamily. In terms of assembly, homodimer.

Its subcellular location is the cytoplasm. It carries out the reaction tRNA(Tyr) + L-tyrosine + ATP = L-tyrosyl-tRNA(Tyr) + AMP + diphosphate + H(+). Its function is as follows. Catalyzes the attachment of tyrosine to tRNA(Tyr) in a two-step reaction: tyrosine is first activated by ATP to form Tyr-AMP and then transferred to the acceptor end of tRNA(Tyr). The protein is Tyrosine--tRNA ligase of Acidithiobacillus ferrooxidans (Thiobacillus ferrooxidans).